We begin with the raw amino-acid sequence, 259 residues long: Trypsin (259 aa).

An N-terminal signal peptide occupies residues Met-1–Ala-32. Residues Ala-33–Pro-36 constitute a propeptide, activation peptide. The Peptidase S1 domain maps to Val-37 to Arg-257. Cys-58 and Cys-74 are oxidised to a cystine. Active-site charge relay system residues include His-73 and Asp-118. Disulfide bonds link Cys-177–Cys-192 and Cys-204–Cys-233. Ser-208 acts as the Charge relay system in catalysis.

The protein belongs to the peptidase S1 family.

The catalysed reaction is Preferential cleavage: Arg-|-Xaa, Lys-|-Xaa.. This Streptomyces griseus protein is Trypsin (sprT).